Consider the following 729-residue polypeptide: Catalase-peroxidase (729 aa).

The segment at 1–26 (MTMDQKTDNAGKCPVAHTAPRGRSNR) is disordered. The tryptophyl-tyrosyl-methioninium (Trp-Tyr) (with M-245) cross-link spans 97–219 (WHSAGTYRIT…LAAVQMGLIY (123 aa)). His98 (proton acceptor) is an active-site residue. The tryptophyl-tyrosyl-methioninium (Tyr-Met) (with W-97) cross-link spans 219–245 (YVNPEGPNGNPDPVAAAHDIRETFARM). His260 contacts heme b.

The protein belongs to the peroxidase family. Peroxidase/catalase subfamily. In terms of assembly, homodimer or homotetramer. Heme b is required as a cofactor. Post-translationally, formation of the three residue Trp-Tyr-Met cross-link is important for the catalase, but not the peroxidase activity of the enzyme.

The enzyme catalyses H2O2 + AH2 = A + 2 H2O. It catalyses the reaction 2 H2O2 = O2 + 2 H2O. Bifunctional enzyme with both catalase and broad-spectrum peroxidase activity. This is Catalase-peroxidase from Sinorhizobium medicae (strain WSM419) (Ensifer medicae).